The chain runs to 353 residues: Colistin resistance protein EmrA (353 aa).

A helical transmembrane segment spans residues tryptophan 21–valine 41. The stretch at valine 132 to aspartate 204 forms a coiled coil.

The protein belongs to the membrane fusion protein (MFP) (TC 8.A.1) family.

It localises to the cell inner membrane. Probably part of an efflux pump system that contributes to adaptation to osmotic stress and resistance to colistin. This Acinetobacter baumannii (strain ATCC 17978 / DSM 105126 / CIP 53.77 / LMG 1025 / NCDC KC755 / 5377) protein is Colistin resistance protein EmrA.